The primary structure comprises 243 residues: MILIPAIDLMGKKVVRLTQGEKERKTEYPISPVELALKYQEAGARLIHVVDLDRAFTGESENFEVIAEIIKNVSIPVQVGGGIRDIESFRELIDLGVSRVIVGTIAVTNPELLEEMLTLDRDKVAVGIDAKNGWVAIKGWVESSNYRALDLAYKVKEMGVTTIIYTDIARDGSLTGPNFNETLKLAIDTGLKVIASGGISGLEDLRRWRELGENKIYGVIAGKAILEGKIDLKEGIRILEGES.

Residue Asp-8 is the Proton acceptor of the active site. Asp-129 functions as the Proton donor in the catalytic mechanism.

The protein belongs to the HisA/HisF family.

The protein localises to the cytoplasm. It catalyses the reaction 1-(5-phospho-beta-D-ribosyl)-5-[(5-phospho-beta-D-ribosylamino)methylideneamino]imidazole-4-carboxamide = 5-[(5-phospho-1-deoxy-D-ribulos-1-ylimino)methylamino]-1-(5-phospho-beta-D-ribosyl)imidazole-4-carboxamide. It functions in the pathway amino-acid biosynthesis; L-histidine biosynthesis; L-histidine from 5-phospho-alpha-D-ribose 1-diphosphate: step 4/9. The protein is 1-(5-phosphoribosyl)-5-[(5-phosphoribosylamino)methylideneamino] imidazole-4-carboxamide isomerase of Carboxydothermus hydrogenoformans (strain ATCC BAA-161 / DSM 6008 / Z-2901).